The chain runs to 82 residues: Small ribosomal subunit protein bS16 (82 aa).

This sequence belongs to the bacterial ribosomal protein bS16 family.

This chain is Small ribosomal subunit protein bS16, found in Psychromonas ingrahamii (strain DSM 17664 / CCUG 51855 / 37).